Consider the following 217-residue polypeptide: Ribonuclease T (217 aa).

An Exonuclease domain is found at 20–195; sequence VVVDVETAGF…YDTEKTAELF (176 aa). Residues Asp23, Glu25, His182, and Asp187 each coordinate Mg(2+). Catalysis depends on His182, which acts as the Proton donor/acceptor.

This sequence belongs to the RNase T family. As to quaternary structure, homodimer. It depends on Mg(2+) as a cofactor.

Trims short 3' overhangs of a variety of RNA species, leaving a one or two nucleotide 3' overhang. Responsible for the end-turnover of tRNA: specifically removes the terminal AMP residue from uncharged tRNA (tRNA-C-C-A). Also appears to be involved in tRNA biosynthesis. The polypeptide is Ribonuclease T (Vibrio vulnificus (strain CMCP6)).